A 620-amino-acid polypeptide reads, in one-letter code: Chaperone protein HscA homolog (620 aa).

It belongs to the heat shock protein 70 family.

In terms of biological role, chaperone involved in the maturation of iron-sulfur cluster-containing proteins. Has a low intrinsic ATPase activity which is markedly stimulated by HscB. In Shewanella woodyi (strain ATCC 51908 / MS32), this protein is Chaperone protein HscA homolog.